The following is a 104-amino-acid chain: Large ribosomal subunit protein uL24 (104 aa).

Belongs to the universal ribosomal protein uL24 family. Part of the 50S ribosomal subunit.

Functionally, one of two assembly initiator proteins, it binds directly to the 5'-end of the 23S rRNA, where it nucleates assembly of the 50S subunit. In terms of biological role, one of the proteins that surrounds the polypeptide exit tunnel on the outside of the subunit. The chain is Large ribosomal subunit protein uL24 from Bradyrhizobium sp. (strain ORS 278).